Here is a 299-residue protein sequence, read N- to C-terminus: Phosphatidylcholine-sterol acyltransferase (299 aa).

Asn-30 carries N-linked (GlcNAc...) asparagine glycosylation. The Nucleophile role is filled by Ser-127. A glycan (N-linked (GlcNAc...) asparagine) is linked at Asn-185. Cys-226 and Cys-269 are joined by a disulfide. Catalysis depends on charge relay system residues Asp-258 and His-290.

Belongs to the AB hydrolase superfamily. Lipase family.

Its subcellular location is the secreted. It carries out the reaction a sterol + a 1,2-diacyl-sn-glycero-3-phosphocholine = a sterol ester + a 1-acyl-sn-glycero-3-phosphocholine. Its activity is regulated as follows. APOA1 is the most potent activator in plasma. Also activated by APOE, APOC1 and APOA4. Functionally, central enzyme in the extracellular metabolism of plasma lipoproteins. Synthesized mainly in the liver and secreted into plasma where it converts cholesterol and phosphatidylcholines (lecithins) to cholesteryl esters and lysophosphatidylcholines on the surface of high and low density lipoproteins (HDLs and LDLs). The cholesterol ester is then transported back to the liver. Has a preference for plasma 16:0-18:2 or 18:O-18:2 phosphatidylcholines. Also produced in the brain by primary astrocytes, and esterifies free cholesterol on nascent APOE-containing lipoproteins secreted from glia and influences cerebral spinal fluid (CSF) APOE- and APOA1 levels. Together with APOE and the cholesterol transporter ABCA1, plays a key role in the maturation of glial-derived, nascent lipoproteins. Required for remodeling high-density lipoprotein particles into their spherical forms. In Eliomys quercinus (Garden dormouse), this protein is Phosphatidylcholine-sterol acyltransferase (LCAT).